Consider the following 345-residue polypeptide: 4-hydroxyproline 2-epimerase (345 aa).

Gln-85 serves as a coordination point for substrate. Ser-93 (proton acceptor) is an active-site residue. Residues 94-95 (GS) and Asp-251 each bind substrate. The Proton donor role is filled by Cys-255. 256 to 257 (GT) is a substrate binding site.

This sequence belongs to the proline racemase family.

The catalysed reaction is trans-4-hydroxy-L-proline = cis-4-hydroxy-D-proline. Functionally, catalyzes the epimerization of trans-4-hydroxy-L-proline (t4LHyp) to cis-4-hydroxy-D-proline (c4DHyp). May be involved in a degradation pathway of t4LHyp, which would allow A.tumefaciens to grow on t4LHyp as a sole carbon source. Can also catalyze the epimerization of trans-3-hydroxy-L-proline (t3LHyp) to cis-3-hydroxy-D-proline (c3DHyp) in vitro. Displays no proline racemase activity. The polypeptide is 4-hydroxyproline 2-epimerase (Agrobacterium fabrum (strain C58 / ATCC 33970) (Agrobacterium tumefaciens (strain C58))).